Consider the following 335-residue polypeptide: UPF0353 protein MAV335 (335 aa).

A run of 2 helical transmembrane segments spans residues 18-38 (WFFL…LMQL) and 67-87 (LPAI…AGPT). The VWFA domain occupies 98–295 (VVMLVIDVSQ…QELKSVYATL (198 aa)). Residues 309–329 (SVGWVRLGALVLRLAADALLI) form a helical membrane-spanning segment.

The protein belongs to the UPF0353 family.

Its subcellular location is the cell membrane. This is UPF0353 protein MAV335 from Mycobacterium avium.